Consider the following 449-residue polypeptide: Glycine--tRNA ligase (449 aa).

2 residues coordinate substrate: Arg-100 and Glu-158. ATP-binding positions include 190-192 (RNE), 200-205 (FRVREF), 275-276 (EL), and 319-322 (GIER). 205-209 (FEQFE) provides a ligand contact to substrate. 315 to 319 (EPSVG) lines the substrate pocket.

The protein belongs to the class-II aminoacyl-tRNA synthetase family. Homodimer.

The protein localises to the cytoplasm. The enzyme catalyses tRNA(Gly) + glycine + ATP = glycyl-tRNA(Gly) + AMP + diphosphate. In terms of biological role, catalyzes the attachment of glycine to tRNA(Gly). This is Glycine--tRNA ligase from Mycoplasma pneumoniae (strain ATCC 29342 / M129 / Subtype 1) (Mycoplasmoides pneumoniae).